The primary structure comprises 49 residues: Photosystem II reaction center protein K (49 aa).

Positions 1–12 (MISSIHLRKLLG) are excised as a propeptide. Residues 24–44 (IIDVLPIIPVLFLLLAFVWQA) traverse the membrane as a helical segment.

It belongs to the PsbK family. In terms of assembly, PSII is composed of 1 copy each of membrane proteins PsbA, PsbB, PsbC, PsbD, PsbE, PsbF, PsbH, PsbI, PsbJ, PsbK, PsbL, PsbM, PsbT, PsbX, PsbY, PsbZ, Psb30/Ycf12, at least 3 peripheral proteins of the oxygen-evolving complex and a large number of cofactors. It forms dimeric complexes.

The protein localises to the plastid. It is found in the chloroplast thylakoid membrane. One of the components of the core complex of photosystem II (PSII). PSII is a light-driven water:plastoquinone oxidoreductase that uses light energy to abstract electrons from H(2)O, generating O(2) and a proton gradient subsequently used for ATP formation. It consists of a core antenna complex that captures photons, and an electron transfer chain that converts photonic excitation into a charge separation. The chain is Photosystem II reaction center protein K from Phacus acuminatus.